The chain runs to 372 residues: Glutamate 5-kinase (372 aa).

An ATP-binding site is contributed by lysine 14. Substrate contacts are provided by serine 54, aspartate 141, and asparagine 153. ATP is bound by residues 173 to 174 (TD) and 215 to 221 (TGGMLTK). The region spanning 280-358 (AGRLVLDDGA…RDIERLLGYV (79 aa)) is the PUA domain.

It belongs to the glutamate 5-kinase family.

Its subcellular location is the cytoplasm. The enzyme catalyses L-glutamate + ATP = L-glutamyl 5-phosphate + ADP. It functions in the pathway amino-acid biosynthesis; L-proline biosynthesis; L-glutamate 5-semialdehyde from L-glutamate: step 1/2. Functionally, catalyzes the transfer of a phosphate group to glutamate to form L-glutamate 5-phosphate. This chain is Glutamate 5-kinase, found in Laribacter hongkongensis (strain HLHK9).